Here is a 549-residue protein sequence, read N- to C-terminus: MTKFVFVTGGVVSSIGKGIVAASLGRLLKSRNYSVSILKLDPYINVDPGTMSPFQHGEVFVTDDGAETDLDLGHYERFTDTAMSRLNSVTTGSIYQAVLNKERRGDYMGGTVQVIPHITNEIKDRILRVAKDTNPDVVIIEIGGTVGDIESLPFLEAIRQFRTEVGRQNVLYMHVTLIPWIPSAGEMKTKPTQHSVKELRSIGIQPDILVCRCDRPLYPGIKDKMSQFCDVPVKSVITCQDARSIYEVPLILEREGLAAQVLSLLNLEQRTPDLSEWQSLVEQLYRPKPPVEIAIVGKYVRLTDAYLSVMEALRHAAIAVGCELNLRWINSEDLENNNPEAYLGGVTGVVVPGGFGIRGVDGKIAAIRYAREHQIPFLGLCLGMQCCVIEWARSIAKLTDANSAEFDPQTSNPVINLLPEQQDVEVLGGTMRLGLYPCRLLSNSLAYQLYQETVIYERHRHRYEFNNAYRNLFLDTGFVVSGSSPDGRLVEIIELPEHPFFIATQFHPEFRSRPNVPHPLFKGFVQAARTHSSDRSNGHTPSETPSLSV.

An amidoligase domain region spans residues 1 to 267 (MTKFVFVTGG…AAQVLSLLNL (267 aa)). Ser-13 lines the CTP pocket. A UTP-binding site is contributed by Ser-13. Residues 14 to 19 (SIGKGI) and Asp-71 contribute to the ATP site. Mg(2+) is bound by residues Asp-71 and Glu-141. CTP is bound by residues 148 to 150 (DIE), 188 to 193 (KTKPTQ), and Lys-224. Residues 188–193 (KTKPTQ) and Lys-224 each bind UTP. One can recognise a Glutamine amidotransferase type-1 domain in the interval 292–534 (EIAIVGKYVR…VQAARTHSSD (243 aa)). Gly-354 lines the L-glutamine pocket. Catalysis depends on Cys-381, which acts as the Nucleophile; for glutamine hydrolysis. L-glutamine is bound by residues 382–385 (LGMQ), Glu-405, and Arg-462. Catalysis depends on residues His-507 and Glu-509.

This sequence belongs to the CTP synthase family. In terms of assembly, homotetramer.

It catalyses the reaction UTP + L-glutamine + ATP + H2O = CTP + L-glutamate + ADP + phosphate + 2 H(+). The catalysed reaction is L-glutamine + H2O = L-glutamate + NH4(+). The enzyme catalyses UTP + NH4(+) + ATP = CTP + ADP + phosphate + 2 H(+). The protein operates within pyrimidine metabolism; CTP biosynthesis via de novo pathway; CTP from UDP: step 2/2. With respect to regulation, allosterically activated by GTP, when glutamine is the substrate; GTP has no effect on the reaction when ammonia is the substrate. The allosteric effector GTP functions by stabilizing the protein conformation that binds the tetrahedral intermediate(s) formed during glutamine hydrolysis. Inhibited by the product CTP, via allosteric rather than competitive inhibition. In terms of biological role, catalyzes the ATP-dependent amination of UTP to CTP with either L-glutamine or ammonia as the source of nitrogen. Regulates intracellular CTP levels through interactions with the four ribonucleotide triphosphates. In Cyanothece sp. (strain PCC 7425 / ATCC 29141), this protein is CTP synthase.